We begin with the raw amino-acid sequence, 176 residues long: Transcription factor E (176 aa).

An HTH TFE/IIEalpha-type domain is found at 8–90 (NDPVIQKYLH…LWTFHYENIP (83 aa)).

Belongs to the TFE family. In terms of assembly, monomer. Interaction with RNA polymerase subunits RpoF and RpoE is necessary for Tfe stimulatory transcription activity. Able to interact with Tbp and RNA polymerase in the absence of DNA promoter. Interacts both with the preinitiation and elongation complexes.

Transcription factor that plays a role in the activation of archaeal genes transcribed by RNA polymerase. Facilitates transcription initiation by enhancing TATA-box recognition by TATA-box-binding protein (Tbp), and transcription factor B (Tfb) and RNA polymerase recruitment. Not absolutely required for transcription in vitro, but particularly important in cases where Tbp or Tfb function is not optimal. It dynamically alters the nucleic acid-binding properties of RNA polymerases by stabilizing the initiation complex and destabilizing elongation complexes. Seems to translocate with the RNA polymerase following initiation and acts by binding to the non template strand of the transcription bubble in elongation complexes. In Haloquadratum walsbyi (strain DSM 16790 / HBSQ001), this protein is Transcription factor E.